A 390-amino-acid chain; its full sequence is ATP-sensitive inward rectifier potassium channel 11 (390 aa).

Over Met-1–Asp-65 the chain is Cytoplasmic. Residues Asn-48 and Arg-50 each coordinate ATP. The chain crosses the membrane as a helical span at residues Leu-66–Leu-92. Residues Ile-93–Ser-116 lie on the Extracellular side of the membrane. Cys-110 and Cys-142 are joined by a disulfide. Positions Phe-117–Phe-133 form an intramembrane region, discontinuously helical; Pore-forming. K(+) contacts are provided by Thr-130 and Phe-133. A Selectivity filter motif is present at residues Thr-130 to Gly-135. Topologically, residues Gly-134–Cys-142 are extracellular. The helical transmembrane segment at Pro-143–Thr-171 threads the bilayer. The Cytoplasmic segment spans residues Ser-172–Ser-390. A 1,2-diacyl-sn-glycero-3-phospho-(1D-myo-inositol-4,5-bisphosphate) is bound at residue Arg-176. Tyr-330 is an ATP binding site. Thr-341 is modified (phosphothreonine; by MAPK1). Phosphoserine; by MAPK1 is present on Ser-385.

It belongs to the inward rectifier-type potassium channel (TC 1.A.2.1) family. KCNJ11 subfamily. As to quaternary structure, homotetramer; the homotetramer binds four ATP molecules (one ATP per subunit). Forms an heterooctamer with ABCC8/SUR1; one KCNJ11 homotetramer interacts with four ABCC8/SUR1 molecules. Interacts with ABCC9/SUR2. Post-translationally, phosphorylation by MAPK1 results in changes in channel gating that destabilize the closed states and reduce the ATP sensitivity.

It is found in the membrane. It catalyses the reaction K(+)(in) = K(+)(out). KATP channels are regulated by cytoplasmic ATP/ADP ratios; ATP inhibits the channel by closing the pore, while ADP activates the channel. Activated by phosphatidylinositol 4,5-biphosphate (PtdIns(4,5)P2). Functionally, inward rectifier potassium channel that forms the pore of ATP-sensitive potassium channels (KATP), regulating potassium permeability as a function of cytoplasmic ATP and ADP concentrations in many different cells. Inward rectifier potassium channels are characterized by a greater tendency to allow potassium to flow into the cell rather than out of it. Their voltage dependence is regulated by the concentration of extracellular potassium; as external potassium is raised, the voltage range of the channel opening shifts to more positive voltages. The inward rectification is mainly due to the blockage of outward current by internal magnesium. Can be blocked by extracellular barium. In pancreatic cells, it forms KATP channels with ABCC8/SUR1. Can form cardiac and smooth muscle-type KATP channels with ABCC9. This Cavia porcellus (Guinea pig) protein is ATP-sensitive inward rectifier potassium channel 11 (KCNJ11).